The chain runs to 205 residues: StAR-related lipid transfer protein 4 (205 aa).

Residues 1–205 (MEGLSDVASF…NFYGDLRKAL (205 aa)) enclose the START domain.

It carries out the reaction cholesterol(in) = cholesterol(out). In terms of biological role, involved in the intracellular transport of cholesterol. Binds cholesterol or other sterols. This is StAR-related lipid transfer protein 4 (STARD4) from Homo sapiens (Human).